Here is a 965-residue protein sequence, read N- to C-terminus: Valine--tRNA ligase (965 aa).

A disordered region spans residues 1-22 (MENTPSHINKTEPSLDKTYSPQ). The short motif at 56–66 (PNVTGSLHMGH) is the 'HIGH' region element. Residues 568–572 (KMSKS) carry the 'KMSKS' region motif. ATP is bound at residue Lys571. Residues 896–965 (LIDKATELDR…IEQQATIAAL (70 aa)) adopt a coiled-coil conformation.

Belongs to the class-I aminoacyl-tRNA synthetase family. ValS type 1 subfamily. In terms of assembly, monomer.

It is found in the cytoplasm. It carries out the reaction tRNA(Val) + L-valine + ATP = L-valyl-tRNA(Val) + AMP + diphosphate. In terms of biological role, catalyzes the attachment of valine to tRNA(Val). As ValRS can inadvertently accommodate and process structurally similar amino acids such as threonine, to avoid such errors, it has a 'posttransfer' editing activity that hydrolyzes mischarged Thr-tRNA(Val) in a tRNA-dependent manner. This is Valine--tRNA ligase from Yersinia pestis.